The following is a 397-amino-acid chain: MKQVYLDNNATTRLDPMVLEAMMPFLTDFYGNPSSIHDFGIPAQAALERAHQQAAALLGAEYPSEIIFTSWPRATPRHAAIALLPERREIITSVVEHPATLAACEHLERQGYRIHRIAVDSEGALDMAQFRAALSPRVALVSVMWANNETGVLFPIGEMAELAHEQGALFHCDAVQVVGKIPIAVGQTRIDMLSCSAHKFHGPKGVGCLYLRRGTRFRPLLRGGHQEYGRRAGTENICGIVGMGAACELANIHLPGMTHIGQLRNRLEHRLLASVPSVMVMGGGQPRVPGTVNLAFEFIEGEAILLLLNQAGIAASSGSACTSGSLEPSHVMRAMNIPYTAAHGTIRFSLSRYTREKEIDYVVATLPPIIDRLRALSPYWQNGKPRPADAVFTPVYG.

Pyridoxal 5'-phosphate is bound by residues Asn148, Gln176, and 196-198; that span reads SAH. Lys199 bears the N6-(pyridoxal phosphate)lysine mark. Residue Thr234 coordinates pyridoxal 5'-phosphate. Cys321 functions as the Cysteine persulfide intermediate in the catalytic mechanism. Position 321 (Cys321) interacts with [2Fe-2S] cluster.

This sequence belongs to the class-V pyridoxal-phosphate-dependent aminotransferase family. NifS/IscS subfamily. In terms of assembly, homodimer. It depends on pyridoxal 5'-phosphate as a cofactor.

The catalysed reaction is (sulfur carrier)-H + L-cysteine = (sulfur carrier)-SH + L-alanine. Catalyzes the removal of elemental sulfur atoms from cysteine to produce alanine. Seems to participate in the biosynthesis of the nitrogenase metalloclusters by providing the inorganic sulfur required for the Fe-S core formation. This is Cysteine desulfurase from Klebsiella pneumoniae.